We begin with the raw amino-acid sequence, 262 residues long: Enoyl-[acyl-carrier-protein] reductase [NADH] FabI (262 aa).

Residues glycine 13, 19 to 20 (SI), glutamine 40, 64 to 65 (DV), and isoleucine 92 each bind NAD(+). Alanine 95 contacts substrate. Active-site proton acceptor residues include tyrosine 146 and tyrosine 156. NAD(+) contacts are provided by residues lysine 163 and 192 to 196 (IRTLA).

The protein belongs to the short-chain dehydrogenases/reductases (SDR) family. FabI subfamily. As to quaternary structure, homotetramer.

The enzyme catalyses a 2,3-saturated acyl-[ACP] + NAD(+) = a (2E)-enoyl-[ACP] + NADH + H(+). It carries out the reaction (2E)-butenoyl-[ACP] + NADH + H(+) = butanoyl-[ACP] + NAD(+). It catalyses the reaction (2E)-decenoyl-[ACP] + NADH + H(+) = decanoyl-[ACP] + NAD(+). The catalysed reaction is (2E)-hexadecenoyl-[ACP] + NADH + H(+) = hexadecanoyl-[ACP] + NAD(+). The enzyme catalyses (2E,9Z)-hexadecadienoyl-[ACP] + NADH + H(+) = (9Z)-hexadecenoyl-[ACP] + NAD(+). It carries out the reaction (2E)-5-methylhexenoyl-[ACP] + NADH + H(+) = 5-methylhexanoyl-[ACP] + NAD(+). Its pathway is lipid metabolism; fatty acid biosynthesis. It participates in cofactor biosynthesis; biotin biosynthesis. With respect to regulation, inhibited by diazaborines, triclosan (5-chloro-2-2,4-dichlorophenoxyphenol), 1,4-disubstituted imidazoles, 1,4-benzodiazepine derivatives, naphthyridinone derivatives, luteolin and curcumin. The antibiotic diazaborine interferes with the activity by binding to the protein and NAD. Catalyzes the reduction of a carbon-carbon double bond in an enoyl moiety that is covalently linked to an acyl carrier protein (ACP). Involved in the elongation cycle of fatty acid which are used in the lipid metabolism and in the biotin biosynthesis. This chain is Enoyl-[acyl-carrier-protein] reductase [NADH] FabI (fabI), found in Escherichia coli (strain K12).